The chain runs to 929 residues: Pyruvate dehydrogenase E1 component (929 aa).

K375 is covalently cross-linked (Isoglutamyl lysine isopeptide (Lys-Gln) (interchain with Q-Cter in protein Pup)).

Homodimer. Part of the PDH complex, consisting of multiple copies of AceE (E1), DlaT (E2) and Lpd (E3). Mg(2+) is required as a cofactor. The cofactor is thiamine diphosphate.

The enzyme catalyses N(6)-[(R)-lipoyl]-L-lysyl-[protein] + pyruvate + H(+) = N(6)-[(R)-S(8)-acetyldihydrolipoyl]-L-lysyl-[protein] + CO2. Component of the pyruvate dehydrogenase (PDH) complex, that catalyzes the overall conversion of pyruvate to acetyl-CoA and CO(2). AceE has reductase activity with pyruvate but does not react with 2-oxoglutarate. In Mycolicibacterium smegmatis (strain ATCC 700084 / mc(2)155) (Mycobacterium smegmatis), this protein is Pyruvate dehydrogenase E1 component (aceE).